The primary structure comprises 90 residues: Probable Fe(2+)-trafficking protein (90 aa).

The protein belongs to the Fe(2+)-trafficking protein family.

Its function is as follows. Could be a mediator in iron transactions between iron acquisition and iron-requiring processes, such as synthesis and/or repair of Fe-S clusters in biosynthetic enzymes. This chain is Probable Fe(2+)-trafficking protein, found in Chromohalobacter salexigens (strain ATCC BAA-138 / DSM 3043 / CIP 106854 / NCIMB 13768 / 1H11).